A 337-amino-acid chain; its full sequence is Glyceraldehyde-3-phosphate dehydrogenase (337 aa).

Residues 12 to 13 (RI), D34, and K79 contribute to the NAD(+) site. Residues 150-152 (SCT), T181, 210-211 (TG), and R233 contribute to the D-glyceraldehyde 3-phosphate site. C151 serves as the catalytic Nucleophile. Position 315 (N315) interacts with NAD(+).

Belongs to the glyceraldehyde-3-phosphate dehydrogenase family. As to quaternary structure, homotetramer.

The protein resides in the cytoplasm. It catalyses the reaction D-glyceraldehyde 3-phosphate + phosphate + NAD(+) = (2R)-3-phospho-glyceroyl phosphate + NADH + H(+). Its pathway is carbohydrate degradation; glycolysis; pyruvate from D-glyceraldehyde 3-phosphate: step 1/5. The polypeptide is Glyceraldehyde-3-phosphate dehydrogenase (GPD) (Cochliobolus lunatus (Filamentous fungus)).